A 602-amino-acid polypeptide reads, in one-letter code: Potassium-transporting ATPase potassium-binding subunit (602 aa).

A run of 10 helical transmembrane segments spans residues 3 to 23 (ANNL…AVPV), 64 to 84 (QYAL…YALL), 135 to 155 (GLTV…LALI), 178 to 198 (LYVL…QGVI), 282 to 302 (FSNF…CLVF), 313 to 333 (VAVL…ETSA), 418 to 438 (GLYG…LMIG), 456 to 476 (VSIV…IAVL), 522 to 542 (WMTA…VLAI), and 565 to 585 (LFVV…YMPA).

This sequence belongs to the KdpA family. In terms of assembly, the system is composed of three essential subunits: KdpA, KdpB and KdpC.

It is found in the cell inner membrane. Functionally, part of the high-affinity ATP-driven potassium transport (or Kdp) system, which catalyzes the hydrolysis of ATP coupled with the electrogenic transport of potassium into the cytoplasm. This subunit binds the periplasmic potassium ions and delivers the ions to the membrane domain of KdpB through an intramembrane tunnel. This is Potassium-transporting ATPase potassium-binding subunit from Burkholderia mallei (strain ATCC 23344).